The primary structure comprises 115 residues: NAD(P)H-quinone oxidoreductase subunit M (115 aa).

It belongs to the complex I NdhM subunit family. NDH-1 can be composed of about 15 different subunits; different subcomplexes with different compositions have been identified which probably have different functions.

The protein resides in the cellular thylakoid membrane. It catalyses the reaction a plastoquinone + NADH + (n+1) H(+)(in) = a plastoquinol + NAD(+) + n H(+)(out). The catalysed reaction is a plastoquinone + NADPH + (n+1) H(+)(in) = a plastoquinol + NADP(+) + n H(+)(out). NDH-1 shuttles electrons from an unknown electron donor, via FMN and iron-sulfur (Fe-S) centers, to quinones in the respiratory and/or the photosynthetic chain. The immediate electron acceptor for the enzyme in this species is believed to be plastoquinone. Couples the redox reaction to proton translocation, and thus conserves the redox energy in a proton gradient. Cyanobacterial NDH-1 also plays a role in inorganic carbon-concentration. This is NAD(P)H-quinone oxidoreductase subunit M from Prochlorococcus marinus (strain MIT 9313).